We begin with the raw amino-acid sequence, 369 residues long: tRNA(Met) cytidine acetate ligase (369 aa).

ATP contacts are provided by residues 7 to 20 (VAEF…HKYL), Gly96, Asn152, and Arg175.

Belongs to the TmcAL family.

Its subcellular location is the cytoplasm. It carries out the reaction cytidine(34) in elongator tRNA(Met) + acetate + ATP = N(4)-acetylcytidine(34) in elongator tRNA(Met) + AMP + diphosphate. Catalyzes the formation of N(4)-acetylcytidine (ac(4)C) at the wobble position of elongator tRNA(Met), using acetate and ATP as substrates. First activates an acetate ion to form acetyladenylate (Ac-AMP) and then transfers the acetyl group to tRNA to form ac(4)C34. The protein is tRNA(Met) cytidine acetate ligase of Streptococcus agalactiae serotype Ia (strain ATCC 27591 / A909 / CDC SS700).